Here is a 183-residue protein sequence, read N- to C-terminus: MTKQPEDWLDDVPGDDIEDEDDEIIWVSKSEIKRDAEELKRLGAEIVDLGKNALDKIPLDADLRAAIELAQRIKMEGRRRQLQLIGKMLRQRDVEPIRQALDKLKNRHNQQVVLFHKLENLRDRLIDQGDDAIAEVLNLWPDADRQQLRTLIRNAKKEKEGNKPPKSARQIFQYLRELAENEE.

This sequence belongs to the DarP family.

It localises to the cytoplasm. Its function is as follows. Member of a network of 50S ribosomal subunit biogenesis factors which assembles along the 30S-50S interface, preventing incorrect 23S rRNA structures from forming. Promotes peptidyl transferase center (PTC) maturation. The protein is Dual-action ribosomal maturation protein DarP of Shigella boydii serotype 18 (strain CDC 3083-94 / BS512).